Consider the following 83-residue polypeptide: Cell division topological specificity factor (83 aa).

This sequence belongs to the MinE family.

Functionally, prevents the cell division inhibition by proteins MinC and MinD at internal division sites while permitting inhibition at polar sites. This ensures cell division at the proper site by restricting the formation of a division septum at the midpoint of the long axis of the cell. The chain is Cell division topological specificity factor from Bordetella parapertussis (strain 12822 / ATCC BAA-587 / NCTC 13253).